Consider the following 205-residue polypeptide: Large ribosomal subunit protein uL4 (205 aa).

The disordered stretch occupies residues 45–97 (RQGTSAVKNRSAVRGGGKKPWRQKGTGRARQGSIRAPQWRGGGTVFGPTPRSY). The span at 60-71 (GGKKPWRQKGTG) shows a compositional bias: basic residues.

Belongs to the universal ribosomal protein uL4 family. Part of the 50S ribosomal subunit.

Functionally, one of the primary rRNA binding proteins, this protein initially binds near the 5'-end of the 23S rRNA. It is important during the early stages of 50S assembly. It makes multiple contacts with different domains of the 23S rRNA in the assembled 50S subunit and ribosome. Forms part of the polypeptide exit tunnel. This chain is Large ribosomal subunit protein uL4, found in Lactobacillus johnsonii (strain CNCM I-12250 / La1 / NCC 533).